A 91-amino-acid chain; its full sequence is MARSVKKGPFCDAHLLKKVEAAAASRDKKPIKTWSRRSTILPDFIGLTIAVHNGRQHVPVYISENMVGHKLGEFALTRTFKGHAADKKAKK.

Belongs to the universal ribosomal protein uS19 family.

Its function is as follows. Protein S19 forms a complex with S13 that binds strongly to the 16S ribosomal RNA. The sequence is that of Small ribosomal subunit protein uS19 from Burkholderia cenocepacia (strain HI2424).